A 208-amino-acid chain; its full sequence is Uracil phosphoribosyltransferase (208 aa).

5-phospho-alpha-D-ribose 1-diphosphate contacts are provided by residues arginine 78, arginine 103, and 130-138 (DPMLATGGS). Uracil-binding positions include isoleucine 193 and 198-200 (GDA). Aspartate 199 is a 5-phospho-alpha-D-ribose 1-diphosphate binding site.

This sequence belongs to the UPRTase family. Requires Mg(2+) as cofactor.

The enzyme catalyses UMP + diphosphate = 5-phospho-alpha-D-ribose 1-diphosphate + uracil. It participates in pyrimidine metabolism; UMP biosynthesis via salvage pathway; UMP from uracil: step 1/1. With respect to regulation, allosterically activated by GTP. Catalyzes the conversion of uracil and 5-phospho-alpha-D-ribose 1-diphosphate (PRPP) to UMP and diphosphate. This is Uracil phosphoribosyltransferase from Mannheimia succiniciproducens (strain KCTC 0769BP / MBEL55E).